A 207-amino-acid polypeptide reads, in one-letter code: Outer-membrane lipoprotein LolB (207 aa).

A signal peptide spans 1–21; it reads MPTKTVRCLRLLPLASLLLAA. C22 is lipidated: N-palmitoyl cysteine. A lipid anchor (S-diacylglycerol cysteine) is attached at C22.

Belongs to the LolB family. In terms of assembly, monomer.

It localises to the cell outer membrane. In terms of biological role, plays a critical role in the incorporation of lipoproteins in the outer membrane after they are released by the LolA protein. The polypeptide is Outer-membrane lipoprotein LolB (Pectobacterium atrosepticum (strain SCRI 1043 / ATCC BAA-672) (Erwinia carotovora subsp. atroseptica)).